A 158-amino-acid polypeptide reads, in one-letter code: MPSMPEEPILTPTPDRFCMFPIQYPQIWEMYKKAEASFWTAEEVDLSQDNRDWENSLTNDERHFIKHVLAFFAASDGIVLENLSTRFMSDVQISEARAFYGFQIAIENIHSEMYSLLLDTYIKDNKERDHLFRAIETIPCDEKSRMGYEMDQRISKLR.

This sequence belongs to the ribonucleoside diphosphate reductase small chain family.

The protein is Putative ribonucleoside-diphosphate reductase small chain B (RNR2B) of Arabidopsis thaliana (Mouse-ear cress).